Consider the following 314-residue polypeptide: Protoheme IX farnesyltransferase (314 aa).

Helical transmembrane passes span 58–78 (LWLV…ASVF), 107–127 (AALV…YVWV), 130–150 (LSAA…TMLL), 173–193 (WTAV…VVFF), 227–247 (VGRQ…LLWP), 248–268 (VAGT…VFLL), and 294–314 (SSNL…LLAG).

It belongs to the UbiA prenyltransferase family. Protoheme IX farnesyltransferase subfamily.

Its subcellular location is the cell membrane. It carries out the reaction heme b + (2E,6E)-farnesyl diphosphate + H2O = Fe(II)-heme o + diphosphate. The protein operates within porphyrin-containing compound metabolism; heme O biosynthesis; heme O from protoheme: step 1/1. Functionally, converts heme B (protoheme IX) to heme O by substitution of the vinyl group on carbon 2 of heme B porphyrin ring with a hydroxyethyl farnesyl side group. This Nocardioides sp. (strain ATCC BAA-499 / JS614) protein is Protoheme IX farnesyltransferase.